An 84-amino-acid chain; its full sequence is Small ribosomal subunit protein eS27 (84 aa).

Positions 1 to 16 are enriched in basic and acidic residues; the sequence is MPLAKDLLHPTPEEEK. The tract at residues 1–23 is disordered; it reads MPLAKDLLHPTPEEEKRKHKKKR. The segment at 37 to 59 adopts a C4-type zinc-finger fold; it reads CPGCYKITTVFSHAQTVVLCVGC.

This sequence belongs to the eukaryotic ribosomal protein eS27 family. Component of the small ribosomal subunit. Part of the small subunit (SSU) processome, composed of more than 70 proteins and the RNA chaperone small nucleolar RNA (snoRNA) U3. Zn(2+) serves as cofactor.

The protein resides in the cytoplasm. The protein localises to the nucleus. It localises to the nucleolus. Component of the small ribosomal subunit. The ribosome is a large ribonucleoprotein complex responsible for the synthesis of proteins in the cell. Required for proper rRNA processing and maturation of 18S rRNAs. Part of the small subunit (SSU) processome, first precursor of the small eukaryotic ribosomal subunit. During the assembly of the SSU processome in the nucleolus, many ribosome biogenesis factors, an RNA chaperone and ribosomal proteins associate with the nascent pre-rRNA and work in concert to generate RNA folding, modifications, rearrangements and cleavage as well as targeted degradation of pre-ribosomal RNA by the RNA exosome. This chain is Small ribosomal subunit protein eS27 (rps27), found in Xenopus laevis (African clawed frog).